Here is a 417-residue protein sequence, read N- to C-terminus: Serine hydroxymethyltransferase (417 aa).

Residues leucine 122 and 126–128 (GHL) each bind (6S)-5,6,7,8-tetrahydrofolate. Lysine 231 carries the post-translational modification N6-(pyridoxal phosphate)lysine.

The protein belongs to the SHMT family. In terms of assembly, homodimer. It depends on pyridoxal 5'-phosphate as a cofactor.

The protein resides in the cytoplasm. The catalysed reaction is (6R)-5,10-methylene-5,6,7,8-tetrahydrofolate + glycine + H2O = (6S)-5,6,7,8-tetrahydrofolate + L-serine. The protein operates within one-carbon metabolism; tetrahydrofolate interconversion. It functions in the pathway amino-acid biosynthesis; glycine biosynthesis; glycine from L-serine: step 1/1. In terms of biological role, catalyzes the reversible interconversion of serine and glycine with tetrahydrofolate (THF) serving as the one-carbon carrier. This reaction serves as the major source of one-carbon groups required for the biosynthesis of purines, thymidylate, methionine, and other important biomolecules. Also exhibits THF-independent aldolase activity toward beta-hydroxyamino acids, producing glycine and aldehydes, via a retro-aldol mechanism. This is Serine hydroxymethyltransferase from Caldicellulosiruptor saccharolyticus (strain ATCC 43494 / DSM 8903 / Tp8T 6331).